The chain runs to 93 residues: UPF0298 protein GWCH70_0997 (93 aa).

It belongs to the UPF0298 family.

Its subcellular location is the cytoplasm. This Geobacillus sp. (strain WCH70) protein is UPF0298 protein GWCH70_0997.